A 476-amino-acid polypeptide reads, in one-letter code: Viral inhibitor of caspase-8-induced apoptosis (476 aa).

It belongs to the herpesviridae US22 family. As to quaternary structure, interacts with host pro-caspase-8/CASP8; this interaction inhibits CASP8 activation.

In terms of biological role, plays a role in the inhibition of apoptosis by interacting with the pro-domain of pro-caspase-8/CASP8 and thus preventing its activation. The protein is Viral inhibitor of caspase-8-induced apoptosis (UL36) of Human cytomegalovirus (strain Merlin) (HHV-5).